We begin with the raw amino-acid sequence, 211 residues long: Uridine kinase (211 aa).

Residue 13 to 20 coordinates ATP; it reads GGTASGKT.

It belongs to the uridine kinase family.

The protein resides in the cytoplasm. The enzyme catalyses uridine + ATP = UMP + ADP + H(+). It carries out the reaction cytidine + ATP = CMP + ADP + H(+). It functions in the pathway pyrimidine metabolism; CTP biosynthesis via salvage pathway; CTP from cytidine: step 1/3. Its pathway is pyrimidine metabolism; UMP biosynthesis via salvage pathway; UMP from uridine: step 1/1. The protein is Uridine kinase of Thermus thermophilus (strain ATCC BAA-163 / DSM 7039 / HB27).